The following is a 216-amino-acid chain: Glycerol-3-phosphate acyltransferase 3 (216 aa).

The next 5 membrane-spanning stretches (helical) occupy residues 6–26 (LLLV…YLVS), 58–78 (LVAA…GLVI), 92–112 (ILFA…WPVF), 125–145 (FGGM…VLII), and 158–178 (ITGV…SGFP).

Belongs to the PlsY family. In terms of assembly, probably interacts with PlsX.

It localises to the cell membrane. It carries out the reaction an acyl phosphate + sn-glycerol 3-phosphate = a 1-acyl-sn-glycero-3-phosphate + phosphate. It functions in the pathway lipid metabolism; phospholipid metabolism. Functionally, catalyzes the transfer of an acyl group from acyl-phosphate (acyl-PO(4)) to glycerol-3-phosphate (G3P) to form lysophosphatidic acid (LPA). This enzyme utilizes acyl-phosphate as fatty acyl donor, but not acyl-CoA or acyl-ACP. The protein is Glycerol-3-phosphate acyltransferase 3 of Dehalococcoides mccartyi (strain ATCC BAA-2266 / KCTC 15142 / 195) (Dehalococcoides ethenogenes (strain 195)).